Consider the following 332-residue polypeptide: Biotin synthase (332 aa).

A Radical SAM core domain is found at 53 to 282 (YFGKKVKLNM…TKEIRISGGR (230 aa)). Residues Cys-71, Cys-75, and Cys-78 each contribute to the [4Fe-4S] cluster site. Positions 115, 147, 207, and 277 each coordinate [2Fe-2S] cluster.

It belongs to the radical SAM superfamily. Biotin synthase family. In terms of assembly, homodimer. [4Fe-4S] cluster serves as cofactor. Requires [2Fe-2S] cluster as cofactor.

It carries out the reaction (4R,5S)-dethiobiotin + (sulfur carrier)-SH + 2 reduced [2Fe-2S]-[ferredoxin] + 2 S-adenosyl-L-methionine = (sulfur carrier)-H + biotin + 2 5'-deoxyadenosine + 2 L-methionine + 2 oxidized [2Fe-2S]-[ferredoxin]. It functions in the pathway cofactor biosynthesis; biotin biosynthesis; biotin from 7,8-diaminononanoate: step 2/2. Its function is as follows. Catalyzes the conversion of dethiobiotin (DTB) to biotin by the insertion of a sulfur atom into dethiobiotin via a radical-based mechanism. The chain is Biotin synthase from Bacillus thuringiensis (strain Al Hakam).